The primary structure comprises 366 residues: Uroporphyrinogen decarboxylase (366 aa).

Substrate contacts are provided by residues 28–32 (RQAGR), Asp78, Tyr160, Thr215, and His333.

The protein belongs to the uroporphyrinogen decarboxylase family. Homodimer.

It is found in the cytoplasm. The catalysed reaction is uroporphyrinogen III + 4 H(+) = coproporphyrinogen III + 4 CO2. Its pathway is porphyrin-containing compound metabolism; protoporphyrin-IX biosynthesis; coproporphyrinogen-III from 5-aminolevulinate: step 4/4. In terms of biological role, catalyzes the decarboxylation of four acetate groups of uroporphyrinogen-III to yield coproporphyrinogen-III. The polypeptide is Uroporphyrinogen decarboxylase (Paraburkholderia phytofirmans (strain DSM 17436 / LMG 22146 / PsJN) (Burkholderia phytofirmans)).